We begin with the raw amino-acid sequence, 437 residues long: Serine--tRNA ligase (437 aa).

227–229 (TAE) serves as a coordination point for L-serine. Residues 258–260 (RSE) and V274 each bind ATP. E281 contacts L-serine. Residue 347–350 (ETHS) participates in ATP binding. T382 lines the L-serine pocket.

Belongs to the class-II aminoacyl-tRNA synthetase family. Type-1 seryl-tRNA synthetase subfamily. As to quaternary structure, homodimer. The tRNA molecule binds across the dimer.

It is found in the cytoplasm. The enzyme catalyses tRNA(Ser) + L-serine + ATP = L-seryl-tRNA(Ser) + AMP + diphosphate + H(+). It carries out the reaction tRNA(Sec) + L-serine + ATP = L-seryl-tRNA(Sec) + AMP + diphosphate + H(+). It participates in aminoacyl-tRNA biosynthesis; selenocysteinyl-tRNA(Sec) biosynthesis; L-seryl-tRNA(Sec) from L-serine and tRNA(Sec): step 1/1. In terms of biological role, catalyzes the attachment of serine to tRNA(Ser). Is also able to aminoacylate tRNA(Sec) with serine, to form the misacylated tRNA L-seryl-tRNA(Sec), which will be further converted into selenocysteinyl-tRNA(Sec). The protein is Serine--tRNA ligase of Deinococcus geothermalis (strain DSM 11300 / CIP 105573 / AG-3a).